Consider the following 358-residue polypeptide: DNA-directed RNA polymerase subunit alpha (358 aa).

The tract at residues 1–231 (MIQNVTDDKI…NIFLSLSNSS (231 aa)) is alpha N-terminal domain (alpha-NTD). The alpha C-terminal domain (alpha-CTD) stretch occupies residues 266–358 (QESLGWKKIS…LELINNKDIS (93 aa)).

This sequence belongs to the RNA polymerase alpha chain family. In terms of assembly, in plastids the minimal PEP RNA polymerase catalytic core is composed of four subunits: alpha, beta, beta', and beta''. When a (nuclear-encoded) sigma factor is associated with the core the holoenzyme is formed, which can initiate transcription.

The protein localises to the plastid. The protein resides in the chloroplast. The catalysed reaction is RNA(n) + a ribonucleoside 5'-triphosphate = RNA(n+1) + diphosphate. In terms of biological role, DNA-dependent RNA polymerase catalyzes the transcription of DNA into RNA using the four ribonucleoside triphosphates as substrates. This is DNA-directed RNA polymerase subunit alpha from Chara vulgaris (Common stonewort).